The primary structure comprises 185 residues: NEDD8-conjugating enzyme UBE2F (185 aa).

An N-acetylmethionine modification is found at Met-1. The interaction with UBA3 stretch occupies residues 1–29 (MLTLASKLKRDDGLKGSRTAATASDSTRR). The UBC core domain occupies 32-185 (VRDKLLVKEV…VDDYIKRYAR (154 aa)). The active-site Glycyl thioester intermediate is Cys-116.

It belongs to the ubiquitin-conjugating enzyme family. UBE2F subfamily. As to quaternary structure, interacts with UBA3 and RBX2. Interacts (N-terminally acetylated form) with (via DCUN1 domain) DCUN1D1, DCUN1D2, DCUN1D3, DCUN1D4 and DCUN1D5. In terms of processing, the acetylation of Met-1 increases affinity for DCUN1D3 by about 2 orders of magnitude and is crucial for NEDD8 transfer to cullins. In terms of tissue distribution, widely expressed (at protein level).

The enzyme catalyses [E1 NEDD8-activating enzyme]-S-[NEDD8 protein]-yl-L-cysteine + [E2 NEDD8-conjugating enzyme]-L-cysteine = [E1 NEDD8-activating enzyme]-L-cysteine + [E2 NEDD8-conjugating enzyme]-S-[NEDD8-protein]-yl-L-cysteine.. It participates in protein modification; protein neddylation. Accepts the ubiquitin-like protein NEDD8 from the UBA3-NAE1 E1 complex and catalyzes its covalent attachment to other proteins. Together with the E3 ubiquitin ligase RNF7/RBX2, specifically neddylates cullin-5 (CUL5). Does not neddylate CUL1, CUL2, CUL3, CUL4A or CUL4B. Mediates neddylation of the CUL9-RBX1 complex. Functionally, (Microbial infection) Following infection by HIV-1 virus, participates to HIV-1 Vif protein-mediated ubiquitination and degradation of APOBEC3G by mediating neddylation of cullin-5 (CUL5). In Homo sapiens (Human), this protein is NEDD8-conjugating enzyme UBE2F (UBE2F).